The following is a 359-amino-acid chain: 4-galactosyl-N-acetylglucosaminide 3-alpha-L-fucosyltransferase FUT6 (359 aa).

The Cytoplasmic portion of the chain corresponds to 1–14; sequence MDPLGPAKPQWSWR. Residues 15-34 form a helical; Signal-anchor for type II membrane protein membrane-spanning segment; that stretch reads CCLTTLLFQLLVAVCFFSYL. Residues 35-359 are Lumenal-facing; it reads RVSRDDPTVY…QTRSIAAWFT (325 aa). Residues Asn-46, Asn-91, Asn-153, and Asn-184 are each glycosylated (N-linked (GlcNAc...) asparagine). The tract at residues 73 to 112 is determines site-specific fucosylation; sequence KPIALPRCSEMVPGTADCNITADRKVYPQADAVIVHHREV.

It belongs to the glycosyltransferase 10 family. Homodimer and monomer. Monomer (secreted form). Post-translationally, N-glycosylated. In terms of processing, proteolytic cleavage releases a secreted glycoform of 43 kDa.

It localises to the golgi apparatus. It is found in the golgi stack membrane. The protein resides in the secreted. It carries out the reaction a beta-D-galactosyl-(1-&gt;4)-N-acetyl-beta-D-glucosaminyl derivative + GDP-beta-L-fucose = a beta-D-galactosyl-(1-&gt;4)-[alpha-L-fucosyl-(1-&gt;3)]-N-acetyl-beta-D-glucosaminyl derivative + GDP + H(+). The catalysed reaction is an N-acetyl-alpha-neuraminyl-(2-&gt;3)-beta-D-galactosyl-(1-&gt;4)-N-acetyl-beta-D-glucosaminyl derivative + GDP-beta-L-fucose = an alpha-Neu5Ac-(2-&gt;3)-beta-D-Gal-(1-&gt;4)-[alpha-L-Fuc-(1-&gt;3)]-beta-D-GlcNAc derivative + GDP + H(+). It catalyses the reaction an alpha-Neu5Ac-(2-&gt;3)-beta-D-Gal-(1-&gt;4)-beta-D-GlcNAc-(1-&gt;3)-beta-D-Gal-(1-&gt;4)-[alpha-L-Fuc-(1-&gt;3)]-beta-D-GlcNAc derivative + GDP-beta-L-fucose = an alpha-Neu5Ac-(2-&gt;3)-beta-D-Gal-(1-&gt;4)-[alpha-L-Fuc-(1-&gt;3)]-beta-D-GlcNAc-(1-&gt;3)-beta-D-Gal-(1-&gt;4)-[alpha-L-Fuc-(1-&gt;3)]-beta-D-GlcNAc derivative + GDP + H(+). The enzyme catalyses a neolactoside nLc6Cer + GDP-beta-L-fucose = beta-D-Gal-(1-&gt;4)-[alpha-L-Fuc-(1-&gt;3)]-beta-D-GlcNAc-(1-&gt;3)-beta-D-Gal-(1-&gt;4)-beta-D-GlcNAc-(1-&gt;3)-beta-D-Gal-(1-&gt;4)-beta-D-Glc-(1&lt;-&gt;1')-Cer + GDP + H(+). It carries out the reaction a neolactoside nLc6Cer + GDP-beta-L-fucose = beta-D-galactosyl-(1-&gt;4)-N-acetyl-beta-D-glucosaminyl-(1-&gt;3)-beta-D-galactosyl-(1-&gt;4)-[alpha-L-fucosyl-(1-&gt;3)]-N-acetyl-beta-D-glucosaminyl-(1-&gt;3)-beta-D-galactosyl-(1-&gt;4)-beta-D-glucosyl-(1&lt;-&gt;1')-ceramide + GDP + H(+). The catalysed reaction is a neolactoside VI(3)-alpha-NeuNAc-nLc6Cer + GDP-beta-L-fucose = a neolactoside VI(3)-alpha-NeuAc,V(3)-alphaFuc-nLc6Cer + GDP + H(+). It catalyses the reaction beta-D-galactosyl-(1-&gt;4)-N-acetyl-D-glucosamine + GDP-beta-L-fucose = beta-D-galactosyl-(1-&gt;4)-[alpha-L-fucosyl-(1-&gt;3)]-N-acetyl-D-glucosamine + GDP + H(+). The enzyme catalyses N-acetyl-alpha-neuraminosyl-(2-&gt;3)-beta-D-galactosyl-(1-&gt;4)-N-acetyl-beta-D-glucosamine + GDP-beta-L-fucose = N-acetyl-alpha-neuraminosyl-(2-&gt;3)-beta-D-galactosyl-(1-&gt;4)-[alpha-L-fucosyl-(1-&gt;3)]-N-acetyl-beta-D-glucosamine + GDP + H(+). It carries out the reaction lactose + GDP-beta-L-fucose = beta-D-galactosyl-(1-&gt;4)-[alpha-L-fucosyl-(1-&gt;3)]-D-glucose + GDP + H(+). The catalysed reaction is alpha-L-Fuc-(1-&gt;2)-beta-D-Gal-(1-&gt;4)-D-Glc + GDP-beta-L-fucose = alpha-L-Fuc-(1-&gt;2)-beta-D-Gal-(1-&gt;4)-[alpha-L-Fuc-(1-&gt;3)]-D-Glc + GDP + H(+). It catalyses the reaction a beta-D-galactosyl-(1-&gt;4)-N-acetyl-beta-D-6-sulfooxy-glucosaminyl derivative + GDP-beta-L-fucose = a beta-D-galactosyl-(1-&gt;4)-[alpha-L-fucosyl-(1-&gt;3)]-N-acetyl-beta-D-6-sulfooxy-glucosaminyl derivative + GDP + H(+). The protein operates within protein modification; protein glycosylation. Functionally, catalyzes the transfer of L-fucose, from a guanosine diphosphate-beta-L-fucose, to the N-acetyl glucosamine (GlcNAc) of a distal alpha2,3 sialylated lactosamine unit of a glycoprotein- or glycolipid-linked sialopolylactosamines chain or of a distal or internal lactosamine unit of a neutral glycoprotein- or glycolipid-linked polylactosamines chain through an alpha-1,3 glycosidic linkage and participates in surface expression of the sialyl Lewis X (sLe(x)), Lewis X (Le(x)) and non sialylated VIM2 determinants. Moreover transfers fucose to H-type 2 (Fucalpha1-2Galbeta1-4GlcNAc) chain acceptor substrates and participates in difucosylated sialyl Lewis x determinants. Also fucosylates a polylactosamine substrate having a 6 sulfate modification at the GlcNAc moiety and gives rise to sialyl and non-sialyl 6-sulfo lewis X. Does not have activity towards type 1 ((Galbeta1-3GlcNAc)) and H-type 1 chain (Fucalpha1-2Galbeta1-3GlcNAc) acceptors substrates. The chain is 4-galactosyl-N-acetylglucosaminide 3-alpha-L-fucosyltransferase FUT6 from Pan troglodytes (Chimpanzee).